Consider the following 229-residue polypeptide: MGKNYAESAKLIDKSTLYSSEEAMNLVVKTSKANFDETIDLAVRLGVDPRHADQQVRGAIILPHGTGKKVKVLVFAKGEKAKEAEAAGADFVGAEELVEKIQKENWFDYDVVVATPDMMGVVGRLGRVLGPKGLMPNPKSGTVTFDVAKALNDIKAGKVEYRVDKTAIIHVVIGKKSFGPEKLKDNFRVLMDAIIKAKPSAAKGQYLKSVSVSSTMGPGVKINPSKVLD.

Belongs to the universal ribosomal protein uL1 family. Part of the 50S ribosomal subunit.

Functionally, binds directly to 23S rRNA. The L1 stalk is quite mobile in the ribosome, and is involved in E site tRNA release. Protein L1 is also a translational repressor protein, it controls the translation of the L11 operon by binding to its mRNA. This Clostridium tetani (strain Massachusetts / E88) protein is Large ribosomal subunit protein uL1.